Reading from the N-terminus, the 29-residue chain is Inorganic pyrophosphatase (29 aa).

It is found in the periplasm. It catalyses the reaction diphosphate + H2O = 2 phosphate + H(+). Its function is as follows. Inorganic pyrophosphatase is an essential enzyme for the activation of sulfate by sulfate reducing bacteria. This is a high activity pyrophosphatase. The sequence is that of Inorganic pyrophosphatase from Nitratidesulfovibrio vulgaris (strain ATCC 29579 / DSM 644 / CCUG 34227 / NCIMB 8303 / VKM B-1760 / Hildenborough) (Desulfovibrio vulgaris).